A 146-amino-acid chain; its full sequence is Large ribosomal subunit protein uL15 (146 aa).

The tract at residues 1–56 (MKLHELKAAEGANKASKRVGRGTGSGLGKTSGKGQNGQNSRSGGGVRPGFEGGQMP) is disordered. Composition is skewed to gly residues over residues 21-35 (RGTGSGLGKTSGKGQ) and 42-52 (SGGGVRPGFEG).

It belongs to the universal ribosomal protein uL15 family. Part of the 50S ribosomal subunit.

In terms of biological role, binds to the 23S rRNA. The polypeptide is Large ribosomal subunit protein uL15 (Clostridium botulinum (strain Langeland / NCTC 10281 / Type F)).